The sequence spans 91 residues: Small ribosomal subunit protein uS19 (91 aa).

The protein belongs to the universal ribosomal protein uS19 family.

Its function is as follows. Protein S19 forms a complex with S13 that binds strongly to the 16S ribosomal RNA. The chain is Small ribosomal subunit protein uS19 from Pseudomonas paraeruginosa (strain DSM 24068 / PA7) (Pseudomonas aeruginosa (strain PA7)).